The chain runs to 260 residues: Ribosomal RNA small subunit methyltransferase J (260 aa).

Residues 125-126 (ER) and Asp-179 each bind S-adenosyl-L-methionine.

The protein belongs to the methyltransferase superfamily. RsmJ family.

It is found in the cytoplasm. The catalysed reaction is guanosine(1516) in 16S rRNA + S-adenosyl-L-methionine = N(2)-methylguanosine(1516) in 16S rRNA + S-adenosyl-L-homocysteine + H(+). Functionally, specifically methylates the guanosine in position 1516 of 16S rRNA. This Pseudomonas fluorescens (strain ATCC BAA-477 / NRRL B-23932 / Pf-5) protein is Ribosomal RNA small subunit methyltransferase J.